The sequence spans 657 residues: Endoplasmic reticulum chaperone BiP homolog (657 aa).

The first 17 residues, Met-1–Cys-17, serve as a signal peptide directing secretion. ATP is bound by residues Gly-38–Tyr-41, Lys-99, Gly-229–Thr-231, Glu-295–Ser-302, and Gly-366–Arg-369. The segment at Lys-128–Lys-282 is nucleotide-binding (NBD). The substrate-binding (SBD) stretch occupies residues Val-402–Thr-502. The interval Leu-607–Leu-657 is disordered. Residues Glu-616–Glu-626 show a composition bias toward basic and acidic residues. Over residues Ala-646–Leu-657 the composition is skewed to acidic residues. The short motif at His-654–Leu-657 is the Prevents secretion from ER element.

It belongs to the heat shock protein 70 family.

The protein localises to the endoplasmic reticulum lumen. The enzyme catalyses ATP + H2O = ADP + phosphate + H(+). With respect to regulation, the chaperone activity is regulated by ATP-induced allosteric coupling of the nucleotide-binding (NBD) and substrate-binding (SBD) domains. In the ADP-bound and nucleotide-free (apo) states, the two domains have little interaction. In contrast, in the ATP-bound state the two domains are tightly coupled, which results in drastically accelerated kinetics in both binding and release of polypeptide substrates. J domain-containing co-chaperones stimulate the ATPase activity and are required for efficient substrate recognition. Its function is as follows. Endoplasmic reticulum chaperone that plays a key role in protein folding and quality control in the endoplasmic reticulum lumen. Required for ER dynamics during the first embryonic cell divisions. Specifically, controls ER transition into sheet-like structures at the onset of mitosis, possibly by regulating homotypic membrane fusion. The chain is Endoplasmic reticulum chaperone BiP homolog (hsp-4) from Caenorhabditis elegans.